Reading from the N-terminus, the 167-residue chain is Interferon gamma (167 aa).

The first 23 residues, Met-1 to Cys-23, serve as a signal peptide directing secretion. At Gln-24 the chain carries Pyrrolidone carboxylic acid. Residues Asn-39 and Asn-107 are each glycosylated (N-linked (GlcNAc...) asparagine).

It belongs to the type II (or gamma) interferon family. Homodimer. Interacts with IFNGR1 (via extracellular domain); this interaction promotes IFNGR1 dimerization. Released primarily from activated T lymphocytes.

Its subcellular location is the secreted. In terms of biological role, type II interferon produced by immune cells such as T-cells and NK cells that plays crucial roles in antimicrobial, antiviral, and antitumor responses by activating effector immune cells and enhancing antigen presentation. Primarily signals through the JAK-STAT pathway after interaction with its receptor IFNGR1 to affect gene regulation. Upon IFNG binding, IFNGR1 intracellular domain opens out to allow association of downstream signaling components JAK2, JAK1 and STAT1, leading to STAT1 activation, nuclear translocation and transcription of IFNG-regulated genes. Many of the induced genes are transcription factors such as IRF1 that are able to further drive regulation of a next wave of transcription. Plays a role in class I antigen presentation pathway by inducing a replacement of catalytic proteasome subunits with immunoproteasome subunits. In turn, increases the quantity, quality, and repertoire of peptides for class I MHC loading. Increases the efficiency of peptide generation also by inducing the expression of activator PA28 that associates with the proteasome and alters its proteolytic cleavage preference. Up-regulates as well MHC II complexes on the cell surface by promoting expression of several key molecules such as cathepsins B/CTSB, H/CTSH, and L/CTSL. Participates in the regulation of hematopoietic stem cells during development and under homeostatic conditions by affecting their development, quiescence, and differentiation. The sequence is that of Interferon gamma (IFNG) from Felis catus (Cat).